A 326-amino-acid polypeptide reads, in one-letter code: Biotin synthase (326 aa).

The 228-residue stretch at 51 to 278 folds into the Radical SAM core domain; it reads NRVQVSRLIS…KSFVRLSAGR (228 aa). Residues C66, C70, and C73 each coordinate [4Fe-4S] cluster. C110, C141, C201, and R273 together coordinate [2Fe-2S] cluster.

Belongs to the radical SAM superfamily. Biotin synthase family. Homodimer. Requires [4Fe-4S] cluster as cofactor. [2Fe-2S] cluster is required as a cofactor.

It catalyses the reaction (4R,5S)-dethiobiotin + (sulfur carrier)-SH + 2 reduced [2Fe-2S]-[ferredoxin] + 2 S-adenosyl-L-methionine = (sulfur carrier)-H + biotin + 2 5'-deoxyadenosine + 2 L-methionine + 2 oxidized [2Fe-2S]-[ferredoxin]. Its pathway is cofactor biosynthesis; biotin biosynthesis; biotin from 7,8-diaminononanoate: step 2/2. Catalyzes the conversion of dethiobiotin (DTB) to biotin by the insertion of a sulfur atom into dethiobiotin via a radical-based mechanism. The chain is Biotin synthase from Paramagnetospirillum magneticum (strain ATCC 700264 / AMB-1) (Magnetospirillum magneticum).